Reading from the N-terminus, the 100-residue chain is A-type ATP synthase subunit F (100 aa).

This sequence belongs to the V-ATPase F subunit family. Has multiple subunits with at least A(3), B(3), C, D, E, F, H, I and proteolipid K(x).

It is found in the cell membrane. Functionally, component of the A-type ATP synthase that produces ATP from ADP in the presence of a proton gradient across the membrane. This is A-type ATP synthase subunit F from Methanospirillum hungatei JF-1 (strain ATCC 27890 / DSM 864 / NBRC 100397 / JF-1).